Here is an 82-residue protein sequence, read N- to C-terminus: Small ribosomal subunit protein bS18 (82 aa).

This sequence belongs to the bacterial ribosomal protein bS18 family. In terms of assembly, part of the 30S ribosomal subunit. Forms a tight heterodimer with protein bS6.

Its function is as follows. Binds as a heterodimer with protein bS6 to the central domain of the 16S rRNA, where it helps stabilize the platform of the 30S subunit. The chain is Small ribosomal subunit protein bS18 from Chlamydia caviae (strain ATCC VR-813 / DSM 19441 / 03DC25 / GPIC) (Chlamydophila caviae).